The primary structure comprises 521 residues: Jacalin-related lectin 38 (521 aa).

Positions Met-2–Asp-48 constitute an F-box domain. 3 Kelch repeats span residues Lys-145 to Val-190, Tyr-326 to His-373, and Met-486 to Pro-521. A Jacalin-type lectin domain is found at Ser-377–Pro-519.

The protein belongs to the jacalin lectin family.

The chain is Jacalin-related lectin 38 (JAL38) from Arabidopsis thaliana (Mouse-ear cress).